Reading from the N-terminus, the 145-residue chain is Transmembrane protein 216 (145 aa).

Transmembrane regions (helical) follow at residues 22 to 42 (ILFFLNGWYNATYFLLELFIF), 56 to 76 (LVLDVVMLLLYLGIEVIRLFF), 89 to 109 (LSISVALTFPSAMMASYYLLL), and 122 to 142 (GILLFFCGSELLLEVLTLAAF).

As to quaternary structure, part of the tectonic-like complex (also named B9 complex). Interacts with TMEM107.

The protein resides in the membrane. It localises to the cytoplasm. It is found in the cytoskeleton. The protein localises to the cilium basal body. Functionally, part of the tectonic-like complex which is required for tissue-specific ciliogenesis and may regulate ciliary membrane composition. The sequence is that of Transmembrane protein 216 (TMEM216) from Homo sapiens (Human).